The primary structure comprises 420 residues: Serine--tRNA ligase (420 aa).

229–231 (TAE) contacts L-serine. 260–262 (RAE) serves as a coordination point for ATP. Residue glutamate 283 coordinates L-serine. 347 to 350 (EISS) contributes to the ATP binding site. Serine 382 provides a ligand contact to L-serine.

It belongs to the class-II aminoacyl-tRNA synthetase family. Type-1 seryl-tRNA synthetase subfamily. Homodimer. The tRNA molecule binds across the dimer.

It is found in the cytoplasm. The catalysed reaction is tRNA(Ser) + L-serine + ATP = L-seryl-tRNA(Ser) + AMP + diphosphate + H(+). The enzyme catalyses tRNA(Sec) + L-serine + ATP = L-seryl-tRNA(Sec) + AMP + diphosphate + H(+). It functions in the pathway aminoacyl-tRNA biosynthesis; selenocysteinyl-tRNA(Sec) biosynthesis; L-seryl-tRNA(Sec) from L-serine and tRNA(Sec): step 1/1. Catalyzes the attachment of serine to tRNA(Ser). Is also able to aminoacylate tRNA(Sec) with serine, to form the misacylated tRNA L-seryl-tRNA(Sec), which will be further converted into selenocysteinyl-tRNA(Sec). The protein is Serine--tRNA ligase of Caldicellulosiruptor bescii (strain ATCC BAA-1888 / DSM 6725 / KCTC 15123 / Z-1320) (Anaerocellum thermophilum).